Consider the following 164-residue polypeptide: Ribosome maturation factor RimM (164 aa).

The PRC barrel domain maps to 92 to 164 (PDSEYYVANL…FVVIVPPEFI (73 aa)).

The protein belongs to the RimM family. In terms of assembly, binds ribosomal protein uS19.

The protein localises to the cytoplasm. Functionally, an accessory protein needed during the final step in the assembly of 30S ribosomal subunit, possibly for assembly of the head region. Essential for efficient processing of 16S rRNA. May be needed both before and after RbfA during the maturation of 16S rRNA. It has affinity for free ribosomal 30S subunits but not for 70S ribosomes. This Orientia tsutsugamushi (strain Ikeda) (Rickettsia tsutsugamushi) protein is Ribosome maturation factor RimM.